The chain runs to 312 residues: uncharacterized protein (312 aa).

Basic and acidic residues-rich tracts occupy residues 1–17 (MAKYDHLELVRLPEQLE) and 28–39 (PDRDGPRHSAKL). Residues 1–39 (MAKYDHLELVRLPEQLERRKHGGGSPPPDRDGPRHSAKL) are disordered.

This is an uncharacterized protein from Sinorhizobium fredii (strain NBRC 101917 / NGR234).